The following is a 1149-amino-acid chain: Protein deacetylase HDAC6 (1149 aa).

Residues 1-61 (MTSTGQDSST…KGKMKKLSQP (61 aa)) form a disordered region. Residues 18–29 (NPQSPLQESSAT) show a composition bias toward polar residues. Ser-21 carries the phosphoserine modification. At Arg-32 the chain carries Omega-N-methylarginine. Ser-43 carries the post-translational modification Phosphoserine. The Nuclear export signal motif lies at 66–75 (LVVGLQGLDL). Histone deacetylase stretches follow at residues 87 to 403 (LVFD…TLLG) and 481 to 799 (GLVY…SLLG). His-215 functions as the 1 in the catalytic mechanism. His-610 (2) is an active-site residue. The interval 954–975 (ALGETEPTPPASHTNKQTTGAS) is disordered. Residues Thr-958, Thr-961, Thr-967, and Thr-971 each carry the phosphothreonine modification. Over residues 964-975 (ASHTNKQTTGAS) the composition is skewed to polar residues. A Phosphoserine modification is found at Ser-975. The segment at 1045–1143 (SWCPHLMAVC…NAAHQNKFGE (99 aa)) adopts a UBP-type zinc-finger fold. Zn(2+)-binding residues include Cys-1047, His-1049, Cys-1067, Cys-1070, Cys-1079, Cys-1082, and Cys-1087. Residues 1088–1090 (SRY) form a ubiquitin binding region. Zn(2+) is bound by residues His-1094, His-1098, His-1104, Cys-1117, and Cys-1120. The interval 1116–1123 (WCYVCQAY) is ubiquitin binding. Phosphoserine is present on Ser-1148.

Belongs to the histone deacetylase family. HD type 2 subfamily. As to quaternary structure, forms a trimeric complex in the nucleus consisting of BANP, HDAC6 and KHDRBS1/SAM68; HDAC6 keeps KHDRBS1 in a deacetylated state which inhibits the inclusion of CD44 alternate exons. The complex is disrupted by MAPK1/MAPK3-mediated phosphorylation of BANP which results in BANP export to the cytoplasm. This facilitates acetylation of KHDRBS1 and CD44 variant exon inclusion. Interacts with SIRT2 (via both phosphorylated, unphosphorylated, active or inactive forms); the interaction is necessary for the complex to interact with alpha-tubulin. Under proteasome impairment conditions, interacts with UBD via its histone deacetylase 1 and UBP-type zinc-finger regions. Interacts with BBIP1, CBFA2T3, CYLD, DDIT3/CHOP, ZMYND15, F-actin and HDAC11. Interacts with RIPOR2; this interaction occurs during early myogenic differentiation and prevents HDAC6 to deacetylate tubulin. Interacts with AURKA; AURKA-mediated phosphorylation of HDAC6 promotes deacetylation of alpha-tubulin. Interacts with DYSF; this interaction occurs during early myogenic differentiation. Interacts with TPPP; inhibiting the tubulin deacetylase activity of HDAC6. Interacts with DYNLL1. Interacts with ATP13A2; the interaction results in recruitment of HDAC6 to lysosomes to promote CTTN deacetylation. Interacts with CCDC141 (via the N-terminal region); inhibiting the deacetylase activity of HDAC6. Interacts with IPO7; the interaction facilitates HDAC6 nuclear translocation in dental papilla cells. Zn(2+) serves as cofactor. Phosphorylated by AURKA; phosphorylation increases HDAC6-mediated deacetylation of alpha-tubulin and subsequent disassembly of cilia. In terms of processing, ubiquitinated. Its polyubiquitination however does not lead to its degradation. Post-translationally, sumoylated in vitro. Expressed in neurons of the cortex. Expressed in Purkinje cells. Detected in keratinocytes (at protein level).

The protein resides in the cytoplasm. It is found in the cytoskeleton. The protein localises to the nucleus. Its subcellular location is the perikaryon. It localises to the cell projection. The protein resides in the dendrite. It is found in the axon. The protein localises to the cilium. Its subcellular location is the microtubule organizing center. It localises to the centrosome. The protein resides in the cilium basal body. The catalysed reaction is N(6)-acetyl-L-lysyl-[protein] + H2O = L-lysyl-[protein] + acetate. It carries out the reaction N(6)-acetyl-L-lysyl-[alpha-tubulin] + H2O = L-lysyl-[alpha-tubulin] + acetate. Its pathway is protein modification; protein ubiquitination. Its function is as follows. Deacetylates a wide range of non-histone substrates. Plays a central role in microtubule-dependent cell motility by mediating deacetylation of tubulin. Required for cilia disassembly via deacetylation of alpha-tubulin. Alpha-tubulin deacetylation results in destabilization of dynamic microtubules. Promotes deacetylation of CTTN, leading to actin polymerization, promotion of autophagosome-lysosome fusion and completion of autophagy. Deacetylates SQSTM1. Deacetylates peroxiredoxins PRDX1 and PRDX2, decreasing their reducing activity. Deacetylates antiviral protein RIGI in the presence of viral mRNAs which is required for viral RNA detection by RIGI. Sequentially deacetylates and polyubiquitinates DNA mismatch repair protein MSH2 which leads to MSH2 degradation, reducing cellular sensitivity to DNA-damaging agents and decreasing cellular DNA mismatch repair activities. Deacetylates DNA mismatch repair protein MLH1 which prevents recruitment of the MutL alpha complex (formed by the MLH1-PMS2 heterodimer) to the MutS alpha complex (formed by the MSH2-MSH6 heterodimer), leading to tolerance of DNA damage. Deacetylates RHOT1/MIRO1 which blocks mitochondrial transport and mediates axon growth inhibition. Deacetylates transcription factor SP1 which leads to increased expression of ENG, positively regulating angiogenesis. Deacetylates KHDRBS1/SAM68 which regulates alternative splicing by inhibiting the inclusion of CD44 alternate exons. Promotes odontoblast differentiation following IPO7-mediated nuclear import and subsequent repression of RUNX2 expression. In addition to its protein deacetylase activity, plays a key role in the degradation of misfolded proteins: when misfolded proteins are too abundant to be degraded by the chaperone refolding system and the ubiquitin-proteasome, mediates the transport of misfolded proteins to a cytoplasmic juxtanuclear structure called aggresome. Probably acts as an adapter that recognizes polyubiquitinated misfolded proteins and target them to the aggresome, facilitating their clearance by autophagy. This chain is Protein deacetylase HDAC6, found in Mus musculus (Mouse).